We begin with the raw amino-acid sequence, 595 residues long: Sucrose transport protein SUT4 (595 aa).

At 1-61 (MDSAAGGGGL…PAARTTTTRK (61 aa)) the chain is on the cytoplasmic side. The interval 29–55 (SLNGGTPRGGSPKDPDATHQQGPPAAR) is disordered. The helical transmembrane segment at 62 to 82 (LVLACMVAAGVQFGWALQLSL) threads the bilayer. Topologically, residues 83-97 (LTPYIQTLGIDHAMA) are extracellular. Residues 98–118 (SFIWLCGPITGFVVQPCVGVW) form a helical membrane-spanning segment. Residues 119-130 (SDKCRSKYGRRR) are Cytoplasmic-facing. A helical transmembrane segment spans residues 131-151 (PFILAGCLMICFAVTLIGFSA). The Extracellular segment spans residues 152–173 (DLGYILGDTTEHCSTYKGSRFR). A helical membrane pass occupies residues 174–194 (AAIIFVLGFWMLDLANNTVQG). Residues 195–213 (PARALLADLSGPDQCNSAN) lie on the Cytoplasmic side of the membrane. A helical membrane pass occupies residues 214 to 234 (AIFCTWMAVGNVLGFSSGASG). Residues 235–256 (NWHKWFPFLMTRACCEACSNLK) lie on the Extracellular side of the membrane. The chain crosses the membrane as a helical span at residues 257-277 (AAFLVAVVFLLFCMSVTLYFA). At 278–365 (EEIPLEPTDA…LTSMRHLPPG (88 aa)) the chain is on the cytoplasmic side. The disordered stretch occupies residues 291–340 (SDSAPLLNGSRDDNNASNEPRNGALPNGHTDGSNVPANSNAEDSNSNREN). Polar residues predominate over residues 320–334 (TDGSNVPANSNAEDS). A helical transmembrane segment spans residues 366–386 (MYSVLLVMALTWLSWFPFFLF). Residues 387–417 (DTDWMGREVYHGDPNGNLSERKAYDNGVREG) lie on the Extracellular side of the membrane. An N-linked (GlcNAc...) asparagine glycan is attached at Asn403. The chain crosses the membrane as a helical span at residues 418 to 438 (AFGLLLNSVVLGIGSFLVDPL). Over 439 to 447 (CRLMGARLV) the chain is Cytoplasmic. A helical membrane pass occupies residues 448–468 (WAISNFTVFICMLATAILSWI). Residues 469–491 (SFDLYSSKLHHIIGANKTVKNSA) are Extracellular-facing. Residue Asn484 is glycosylated (N-linked (GlcNAc...) asparagine). The helical transmembrane segment at 492 to 512 (LIVFSLLGLPLSITYSVPFSV) threads the bilayer. Residues 513 to 525 (TAELTAGTGGGQG) are Cytoplasmic-facing. The chain crosses the membrane as a helical span at residues 526 to 546 (LATGVLNLAIVVPQIVVSLGA). At 547–556 (GPWDALFGGG) the chain is on the extracellular side. A helical membrane pass occupies residues 557 to 577 (NVPAFALASVFSLGAGVLAVL). Topologically, residues 578-595 (KLPKLPNSYRSAGFHGFG) are cytoplasmic.

Belongs to the glycoside-pentoside-hexuronide (GPH) cation symporter transporter (TC 2.A.2.4) family. As to quaternary structure, homodimer.

Its subcellular location is the cell membrane. It participates in glycan biosynthesis; sucrose metabolism. Responsible for the transport of sucrose into the cell, with the concomitant uptake of protons (symport system). May also transport other glucosides. This Oryza sativa subsp. indica (Rice) protein is Sucrose transport protein SUT4 (SUT4).